The chain runs to 292 residues: Aspartate carbamoyltransferase catalytic subunit (292 aa).

The carbamoyl phosphate site is built by Arg50 and Thr51. Lys78 contributes to the L-aspartate binding site. Positions 100, 128, and 131 each coordinate carbamoyl phosphate. Residues Arg161 and Arg211 each coordinate L-aspartate. Residues Gly250 and Pro251 each contribute to the carbamoyl phosphate site.

The protein belongs to the aspartate/ornithine carbamoyltransferase superfamily. ATCase family. Heterododecamer (2C3:3R2) of six catalytic PyrB chains organized as two trimers (C3), and six regulatory PyrI chains organized as three dimers (R2).

It carries out the reaction carbamoyl phosphate + L-aspartate = N-carbamoyl-L-aspartate + phosphate + H(+). It participates in pyrimidine metabolism; UMP biosynthesis via de novo pathway; (S)-dihydroorotate from bicarbonate: step 2/3. Catalyzes the condensation of carbamoyl phosphate and aspartate to form carbamoyl aspartate and inorganic phosphate, the committed step in the de novo pyrimidine nucleotide biosynthesis pathway. In Nitratiruptor sp. (strain SB155-2), this protein is Aspartate carbamoyltransferase catalytic subunit.